Here is a 599-residue protein sequence, read N- to C-terminus: Elongation factor 4 (599 aa).

The region spanning 2-184 is the tr-type G domain; that stretch reads KNIRNFSIIA…RLVRDIPPPE (183 aa). Residues 14–19 and 131–134 contribute to the GTP site; these read DHGKST and NKID.

Belongs to the TRAFAC class translation factor GTPase superfamily. Classic translation factor GTPase family. LepA subfamily.

The protein localises to the cell inner membrane. The enzyme catalyses GTP + H2O = GDP + phosphate + H(+). Required for accurate and efficient protein synthesis under certain stress conditions. May act as a fidelity factor of the translation reaction, by catalyzing a one-codon backward translocation of tRNAs on improperly translocated ribosomes. Back-translocation proceeds from a post-translocation (POST) complex to a pre-translocation (PRE) complex, thus giving elongation factor G a second chance to translocate the tRNAs correctly. Binds to ribosomes in a GTP-dependent manner. This chain is Elongation factor 4, found in Citrobacter koseri (strain ATCC BAA-895 / CDC 4225-83 / SGSC4696).